The following is a 788-amino-acid chain: MDRDSPFADPDRSDPLPAPSNTLKASIFAQSRIVHPSTSVYNQFGRHRHDDIGQESFHEGIQPSVASLANLQGSYTAKSIHPHHSAIGLRNSSYDDHGDDADEQDPEDLLSDEELGLIAGDARNPSASLSYASNRSRKRRTNPSDPRSRASAVGGLSAKQKALWMWANVDNLDAFLQEVYAYYVGRGAICIALSRSLNLLTVAFVICFSTFLFGCIDYSSIRHDGQLSDVIVGHCVAGFSPFATLVVVLLLAAFGWQAVQFVLGLSRLRAMHRFYEQLLGIPDADVQSIPWHEVVNRLSALRDQHPTTSLSSADEMELGQRTSSSLRRSHPQPLDAHDVANRIMRQENYLIALFNENILDLSVPGLRSRSPSLTRSLEWNLHFCLLGFLFDSNGQVRHAFLSERYRADLIEGLRRRFLFMAVVNAIFAPFIVLYLLLYSFFRYFEEYHKDPSNLGSRQYTQYARWKFREFNELPHLFRRRCRTSYVAASKYMDQFPKEKTAIVARFVAFVAGSFTAVLLLASVMDPDVFVHFNITPQRNVLFYIGVFGAILAVARGMIPDEHVVFEPEAMLREVIEQTHYLPQDWKGRFHSAQVHQAFGQLYTLKIYIFLQELLSVVTTPFVLWLSLPACAPDLIDFLRKYTVHVDGLGHVCSFAVFDFARQPTASTMGGAAAKGIHRQQQQQQQQQQQSGGSGRTRAPRNGMSQAKMEQSILGFRANHPDWDPAAHASTASIQRVDDDAGATTLQYGHGDGRSTSDAPTGVGAGAKVKDLIDHIYRGSGGAAGASRW.

The segment covering 1-14 has biased composition (basic and acidic residues); sequence MDRDSPFADPDRSD. 3 disordered regions span residues 1–22, 87–108, and 124–153; these read MDRD…PSNT, IGLR…DPED, and NPSA…ASAV. Topologically, residues 1 to 195 are cytoplasmic; it reads MDRDSPFADP…RGAICIALSR (195 aa). The span at 97-108 shows a compositional bias: acidic residues; it reads HGDDADEQDPED. Polar residues predominate over residues 125-134; the sequence is PSASLSYASN. Residues 196–216 form a helical membrane-spanning segment; it reads SLNLLTVAFVICFSTFLFGCI. Residues 217-235 are Lumenal-facing; the sequence is DYSSIRHDGQLSDVIVGHC. The chain crosses the membrane as a helical span at residues 236-256; that stretch reads VAGFSPFATLVVVLLLAAFGW. The Cytoplasmic segment spans residues 257 to 416; it reads QAVQFVLGLS…ADLIEGLRRR (160 aa). Positions 307-332 are disordered; the sequence is TTSLSSADEMELGQRTSSSLRRSHPQ. The stretch at 417 to 437 is an intramembrane region; sequence FLFMAVVNAIFAPFIVLYLLL. Residues 438 to 500 are Cytoplasmic-facing; that stretch reads YSFFRYFEEY…YMDQFPKEKT (63 aa). Residues 501–521 form a helical membrane-spanning segment; that stretch reads AIVARFVAFVAGSFTAVLLLA. Residues 522–538 are Lumenal-facing; sequence SVMDPDVFVHFNITPQR. The helical transmembrane segment at 539 to 559 threads the bilayer; it reads NVLFYIGVFGAILAVARGMIP. Residues 560-605 lie on the Cytoplasmic side of the membrane; sequence DEHVVFEPEAMLREVIEQTHYLPQDWKGRFHSAQVHQAFGQLYTLK. The stretch at 606–626 is an intramembrane region; that stretch reads IYIFLQELLSVVTTPFVLWLS. Residues 627–788 lie on the Cytoplasmic side of the membrane; the sequence is LPACAPDLID…SGGAAGASRW (162 aa). Disordered stretches follow at residues 668–706 and 742–762; these read MGGA…MSQA and ATTL…PTGV. Residues 679 to 689 are compositionally biased toward low complexity; that stretch reads QQQQQQQQQQQ.

It belongs to the ATG9 family. As to quaternary structure, homotrimer; forms a homotrimer with a central pore that forms a path between the two membrane leaflets. Phosphorylated by ATG1. ATG1 phosphorylation is required for preautophagosome elongation.

Its subcellular location is the preautophagosomal structure membrane. It is found in the cytoplasmic vesicle membrane. The protein localises to the golgi apparatus membrane. The protein resides in the endoplasmic reticulum membrane. It catalyses the reaction a 1,2-diacyl-sn-glycero-3-phosphocholine(in) = a 1,2-diacyl-sn-glycero-3-phosphocholine(out). The enzyme catalyses a 1,2-diacyl-sn-glycero-3-phospho-L-serine(in) = a 1,2-diacyl-sn-glycero-3-phospho-L-serine(out). It carries out the reaction a 1,2-diacyl-sn-glycero-3-phosphoethanolamine(in) = a 1,2-diacyl-sn-glycero-3-phosphoethanolamine(out). The catalysed reaction is a 1,2-diacyl-sn-glycero-3-phospho-(1D-myo-inositol-3-phosphate)(in) = a 1,2-diacyl-sn-glycero-3-phospho-(1D-myo-inositol-3-phosphate)(out). In terms of biological role, phospholipid scramblase involved in autophagy and cytoplasm to vacuole transport (Cvt) vesicle formation. Cycles between the preautophagosomal structure/phagophore assembly site (PAS) and the cytoplasmic vesicle pool and supplies membrane for the growing autophagosome. Lipid scramblase activity plays a key role in preautophagosomal structure/phagophore assembly by distributing the phospholipids that arrive through ATG2 from the cytoplasmic to the luminal leaflet of the bilayer, thereby driving autophagosomal membrane expansion. Required for mitophagy. Also involved in endoplasmic reticulum-specific autophagic process and is essential for the survival of cells subjected to severe ER stress. Different machineries are required for anterograde trafficking to the PAS during either the Cvt pathway or bulk autophagy and for retrograde trafficking. The chain is Autophagy-related protein 9 (ATG9) from Mycosarcoma maydis (Corn smut fungus).